The chain runs to 1381 residues: DNA-directed RNA polymerase subunit beta (1381 aa).

It belongs to the RNA polymerase beta chain family. In terms of assembly, the RNAP catalytic core consists of 2 alpha, 1 beta, 1 beta' and 1 omega subunit. When a sigma factor is associated with the core the holoenzyme is formed, which can initiate transcription.

The enzyme catalyses RNA(n) + a ribonucleoside 5'-triphosphate = RNA(n+1) + diphosphate. Functionally, DNA-dependent RNA polymerase catalyzes the transcription of DNA into RNA using the four ribonucleoside triphosphates as substrates. The protein is DNA-directed RNA polymerase subunit beta of Halorhodospira halophila (strain DSM 244 / SL1) (Ectothiorhodospira halophila (strain DSM 244 / SL1)).